We begin with the raw amino-acid sequence, 438 residues long: tRNA-2-methylthio-N(6)-dimethylallyladenosine synthase (438 aa).

In terms of domain architecture, MTTase N-terminal spans Lys-2–Leu-118. The [4Fe-4S] cluster site is built by Cys-11, Cys-47, Cys-81, Cys-157, Cys-161, and Cys-164. One can recognise a Radical SAM core domain in the interval Pro-143–Gln-373. Residues Gln-376 to Val-438 enclose the TRAM domain.

The protein belongs to the methylthiotransferase family. MiaB subfamily. Monomer. [4Fe-4S] cluster is required as a cofactor.

It localises to the cytoplasm. It catalyses the reaction N(6)-dimethylallyladenosine(37) in tRNA + (sulfur carrier)-SH + AH2 + 2 S-adenosyl-L-methionine = 2-methylsulfanyl-N(6)-dimethylallyladenosine(37) in tRNA + (sulfur carrier)-H + 5'-deoxyadenosine + L-methionine + A + S-adenosyl-L-homocysteine + 2 H(+). Functionally, catalyzes the methylthiolation of N6-(dimethylallyl)adenosine (i(6)A), leading to the formation of 2-methylthio-N6-(dimethylallyl)adenosine (ms(2)i(6)A) at position 37 in tRNAs that read codons beginning with uridine. The polypeptide is tRNA-2-methylthio-N(6)-dimethylallyladenosine synthase (Syntrophotalea carbinolica (strain DSM 2380 / NBRC 103641 / GraBd1) (Pelobacter carbinolicus)).